We begin with the raw amino-acid sequence, 109 residues long: ATPase inhibitor, mitochondrial (109 aa).

A mitochondrion-targeting transit peptide spans 1 to 25 (MAATALAARTRQAVWSVWAMQGRGF). The segment at 26-52 (GSESGDNVRSSAGAVRDAGGAFGKREQ) is disordered. The N-terminal inhibitory region stretch occupies residues 26-52 (GSESGDNVRSSAGAVRDAGGAFGKREQ). Residues 69-109 (ALKKHHENEISHHAKEIERLQKEIERHKQSIKKLKQSEDDD) adopt a coiled-coil conformation. An antiparallel alpha-helical coiled coil region region spans residues 74-106 (HENEISHHAKEIERLQKEIERHKQSIKKLKQSE). At Lys-103 the chain carries N6-succinyllysine.

It belongs to the ATPase inhibitor family. As to quaternary structure, homodimer; represents the active form and is present at a pH value below 6.5. Homotetramer; represents the inactive form and is present at a pH value above 7.0.

Its subcellular location is the mitochondrion. Its function is as follows. Endogenous F(1)F(o)-ATPase inhibitor limiting ATP depletion when the mitochondrial membrane potential falls below a threshold and the F(1)F(o)-ATP synthase starts hydrolyzing ATP to pump protons out of the mitochondrial matrix. Required to avoid the consumption of cellular ATP when the F(1)F(o)-ATP synthase enzyme acts as an ATP hydrolase. Indirectly acts as a regulator of heme synthesis in erythroid tissues: regulates heme synthesis by modulating the mitochondrial pH and redox potential, allowing FECH to efficiently catalyze the incorporation of iron into protoporphyrin IX to produce heme. This Bos taurus (Bovine) protein is ATPase inhibitor, mitochondrial.